We begin with the raw amino-acid sequence, 435 residues long: Transcription factor tau 55 kDa subunit (435 aa).

The tract at residues 362-417 (GLLSPTEENETTNAGQSKGSSTANDPNIQIQEEDVGLPDSTNTSRDHTGDKEEVQS) is disordered. The residue at position 365 (serine 365) is a Phosphoserine. Positions 372–391 (TTNAGQSKGSSTANDPNIQI) are enriched in polar residues. Positions 405–417 (SRDHTGDKEEVQS) are enriched in basic and acidic residues.

Component of the TFIIIC complex composed of TFC1, TFC3, TFC4, TFC6, TFC7 and TFC8. The subunits are organized in two globular domains, tauA and tauB, connected by a proteolysis-sensitive and flexible linker.

Its subcellular location is the nucleus. Its function is as follows. TFIIIC mediates tRNA and 5S RNA gene activation by binding to intragenic promoter elements. Upstream of the transcription start site, TFIIIC assembles the initiation complex TFIIIB-TFIIIC-tDNA, which is sufficient for RNA polymerase III recruitment and function. Part of the tauA domain of TFIIIC that binds boxA DNA promoter sites of tRNA and similar genes. The sequence is that of Transcription factor tau 55 kDa subunit (TFC7) from Saccharomyces cerevisiae (strain ATCC 204508 / S288c) (Baker's yeast).